A 78-amino-acid polypeptide reads, in one-letter code: Small ribosomal subunit protein bS18A (78 aa).

The protein belongs to the bacterial ribosomal protein bS18 family. Part of the 30S ribosomal subunit. Forms a tight heterodimer with protein bS6.

Its function is as follows. Binds as a heterodimer with protein bS6 to the central domain of the 16S rRNA, where it helps stabilize the platform of the 30S subunit. In Streptomyces avermitilis (strain ATCC 31267 / DSM 46492 / JCM 5070 / NBRC 14893 / NCIMB 12804 / NRRL 8165 / MA-4680), this protein is Small ribosomal subunit protein bS18A.